The primary structure comprises 158 residues: S-ribosylhomocysteine lyase (158 aa).

The Fe cation site is built by His-54, His-58, and Cys-124.

It belongs to the LuxS family. In terms of assembly, homodimer. Fe cation serves as cofactor.

The enzyme catalyses S-(5-deoxy-D-ribos-5-yl)-L-homocysteine = (S)-4,5-dihydroxypentane-2,3-dione + L-homocysteine. Functionally, involved in the synthesis of autoinducer 2 (AI-2) which is secreted by bacteria and is used to communicate both the cell density and the metabolic potential of the environment. The regulation of gene expression in response to changes in cell density is called quorum sensing. Catalyzes the transformation of S-ribosylhomocysteine (RHC) to homocysteine (HC) and 4,5-dihydroxy-2,3-pentadione (DPD). This chain is S-ribosylhomocysteine lyase, found in Lactobacillus gasseri (strain ATCC 33323 / DSM 20243 / BCRC 14619 / CIP 102991 / JCM 1131 / KCTC 3163 / NCIMB 11718 / NCTC 13722 / AM63).